The sequence spans 140 residues: Nucleoside diphosphate kinase (140 aa).

ATP is bound by residues Lys-11, Phe-59, Arg-87, Thr-93, Arg-104, and Asn-114. The active-site Pros-phosphohistidine intermediate is the His-117.

It belongs to the NDK family. As to quaternary structure, homotetramer. Mg(2+) serves as cofactor.

The protein localises to the cytoplasm. The enzyme catalyses a 2'-deoxyribonucleoside 5'-diphosphate + ATP = a 2'-deoxyribonucleoside 5'-triphosphate + ADP. The catalysed reaction is a ribonucleoside 5'-diphosphate + ATP = a ribonucleoside 5'-triphosphate + ADP. Major role in the synthesis of nucleoside triphosphates other than ATP. The ATP gamma phosphate is transferred to the NDP beta phosphate via a ping-pong mechanism, using a phosphorylated active-site intermediate. This is Nucleoside diphosphate kinase from Cereibacter sphaeroides (strain ATCC 17029 / ATH 2.4.9) (Rhodobacter sphaeroides).